A 342-amino-acid chain; its full sequence is Histidinol-phosphate aminotransferase 2 (342 aa).

Lysine 206 is subject to N6-(pyridoxal phosphate)lysine.

The protein belongs to the class-II pyridoxal-phosphate-dependent aminotransferase family. Histidinol-phosphate aminotransferase subfamily. Pyridoxal 5'-phosphate serves as cofactor.

The enzyme catalyses L-histidinol phosphate + 2-oxoglutarate = 3-(imidazol-4-yl)-2-oxopropyl phosphate + L-glutamate. It participates in amino-acid biosynthesis; L-histidine biosynthesis; L-histidine from 5-phospho-alpha-D-ribose 1-diphosphate: step 7/9. The protein is Histidinol-phosphate aminotransferase 2 (hisC2) of Archaeoglobus fulgidus (strain ATCC 49558 / DSM 4304 / JCM 9628 / NBRC 100126 / VC-16).